A 169-amino-acid chain; its full sequence is Der GTPase-activating protein YihI (169 aa).

2 disordered regions span residues 1-98 and 144-169; these read MKPS…PQAE and GLSYDDDEEEEEDEKQEDMMRLLRGN. Basic residues predominate over residues 10–19; sequence SKGHAKARRK. The span at 20–30 shows a compositional bias: basic and acidic residues; that stretch reads TREELDQEARD. Over residues 31–40 the composition is skewed to basic residues; it reads RKRQKKRRGH. The span at 49 to 58 shows a compositional bias: polar residues; it reads GNTTSGSKGQ. The span at 147-159 shows a compositional bias: acidic residues; the sequence is YDDDEEEEEDEKQ. Residues 160–169 show a composition bias toward basic and acidic residues; the sequence is EDMMRLLRGN.

This sequence belongs to the YihI family. Interacts with Der.

In terms of biological role, a GTPase-activating protein (GAP) that modifies Der/EngA GTPase function. May play a role in ribosome biogenesis. The protein is Der GTPase-activating protein YihI of Escherichia coli O139:H28 (strain E24377A / ETEC).